A 413-amino-acid chain; its full sequence is Elongation factor 1-alpha (413 aa).

The 207-residue stretch at 5-211 (KEHMNLAFIG…DDLEAPEKPV (207 aa)) folds into the tr-type G domain. The segment at 14–21 (GHVDHGKS) is G1. 14-21 (GHVDHGKS) lines the GTP pocket. Mg(2+) is bound at residue serine 21. The tract at residues 60–64 (GVTID) is G2. Residues 81 to 84 (DCPG) are G3. Residues 81–85 (DCPGH) and 136–139 (NKMD) contribute to the GTP site. A G4 region spans residues 136–139 (NKMD). Residues 175–177 (SAF) are G5.

This sequence belongs to the TRAFAC class translation factor GTPase superfamily. Classic translation factor GTPase family. EF-Tu/EF-1A subfamily.

The protein resides in the cytoplasm. The enzyme catalyses GTP + H2O = GDP + phosphate + H(+). GTP hydrolase that promotes the GTP-dependent binding of aminoacyl-tRNA to the A-site of ribosomes during protein biosynthesis. The polypeptide is Elongation factor 1-alpha (Methanothermobacter thermautotrophicus (strain ATCC 29096 / DSM 1053 / JCM 10044 / NBRC 100330 / Delta H) (Methanobacterium thermoautotrophicum)).